The sequence spans 179 residues: Disulfide bond formation protein B (179 aa).

The Cytoplasmic segment spans residues 1-14 (MLSYFKELSLNRTA). Residues 15–31 (WLLLAFVAFALEASAIY) traverse the membrane as a helical segment. Residues 32–49 (FQYGMGLVPCVMCVYERL) are Periplasmic-facing. A disulfide bridge connects residues Cys41 and Cys44. Residues 50 to 65 (AIFGLLIAGLVGAISP) form a helical membrane-spanning segment. Over 66 to 72 (RFFLTRW) the chain is Cytoplasmic. The helical transmembrane segment at 73 to 90 (LALLLWGFSAFKGLALAI) threads the bilayer. Topologically, residues 91–146 (KHHDYQANPSPWNQCEFKPEFPQTMPFDQWFPSIFAPGPVNCSEKQWEMFGLGMPE) are periplasmic. Residues Cys105 and Cys132 are joined by a disulfide bond. Residues 147–165 (WLILAFSIFALMFVIVLLS) traverse the membrane as a helical segment. Over 166–179 (QFKRAKPQYRSVFR) the chain is Cytoplasmic.

It belongs to the DsbB family.

Its subcellular location is the cell inner membrane. Functionally, required for disulfide bond formation in some periplasmic proteins. Acts by oxidizing the DsbA protein. The polypeptide is Disulfide bond formation protein B (Actinobacillus pleuropneumoniae serotype 5b (strain L20)).